The primary structure comprises 298 residues: Tyrosine recombinase XerD (298 aa).

Positions 3 to 88 (ALDHPLIDQF…GLRGFFRYLL (86 aa)) constitute a Core-binding (CB) domain. The region spanning 109 to 292 (PLPKSLSEAD…AKARLQQLHA (184 aa)) is the Tyr recombinase domain. Active-site residues include arginine 149, lysine 173, histidine 244, arginine 247, and histidine 270. Catalysis depends on tyrosine 279, which acts as the O-(3'-phospho-DNA)-tyrosine intermediate.

This sequence belongs to the 'phage' integrase family. XerD subfamily. Forms a cyclic heterotetrameric complex composed of two molecules of XerC and two molecules of XerD.

The protein localises to the cytoplasm. Its function is as follows. Site-specific tyrosine recombinase, which acts by catalyzing the cutting and rejoining of the recombining DNA molecules. The XerC-XerD complex is essential to convert dimers of the bacterial chromosome into monomers to permit their segregation at cell division. It also contributes to the segregational stability of plasmids. This is Tyrosine recombinase XerD from Pseudomonas putida (strain ATCC 47054 / DSM 6125 / CFBP 8728 / NCIMB 11950 / KT2440).